Reading from the N-terminus, the 342-residue chain is Cathepsin B-like cysteine proteinase 1 (342 aa).

An N-terminal signal peptide occupies residues 1 to 18; the sequence is MKYLVLALCTYLCSQTGA. Positions 19–86 are cleaved as a propeptide — activation peptide; it reads DENAAQGIPL…VKEDPDPEVD (68 aa). A glycan (N-linked (GlcNAc...) asparagine) is linked at Asn-99. Disulfide bonds link Cys-100–Cys-128, Cys-111–Cys-156, Cys-147–Cys-214, Cys-148–Cys-152, Cys-185–Cys-218, and Cys-193–Cys-205. Cys-114 is a catalytic residue. A glycan (N-linked (GlcNAc...) asparagine) is linked at Asn-138. N-linked (GlcNAc...) asparagine glycosylation is present at Asn-198. His-285 is a catalytic residue. N-linked (GlcNAc...) asparagine glycosylation occurs at Asn-296. Asn-305 is a catalytic residue.

Belongs to the peptidase C1 family.

Its function is as follows. Expression of the protease correlates with blood-feeding and suggests a role for the protease in blood digestion. The sequence is that of Cathepsin B-like cysteine proteinase 1 (AC-1) from Haemonchus contortus (Barber pole worm).